Reading from the N-terminus, the 666-residue chain is Heparin-sulfate lyase (666 aa).

The signal sequence occupies residues M1–A22. The active-site Proton acceptor is the Y301.

It belongs to the polysaccharide lyase 12 family.

Its subcellular location is the periplasm. It catalyses the reaction Elimination of sulfate, appears to act on linkages between N-acetyl-D-glucosamine and uronate. Product is an unsaturated sugar.. Functionally, specifically cleaves heparan sulfate-rich regions of acidic polysaccharides. Also able to degrade heparin and hyaluronic acid. Does not act on N,O-desulfated glucosamine or N-acetyl-O-sulfated glucosamine linkages. Functions in cleaving metazoan heparan sulfate and providing carbon, nitrogen and sulfate sources for microorganisms. This is Heparin-sulfate lyase (hepC) from Bacteroides stercoris.